We begin with the raw amino-acid sequence, 357 residues long: Dual-specificity RNA methyltransferase RlmN (357 aa).

Catalysis depends on Glu-89, which acts as the Proton acceptor. One can recognise a Radical SAM core domain in the interval 109-340 (EGEKYTVCVS…CTIRESKALD (232 aa)). Cys-116 and Cys-345 form a disulfide bridge. Residues Cys-123, Cys-127, and Cys-130 each contribute to the [4Fe-4S] cluster site. Residues 173-174 (GE), Ser-203, 226-228 (SLH), and Asn-302 each bind S-adenosyl-L-methionine. Cys-345 (S-methylcysteine intermediate) is an active-site residue.

Belongs to the radical SAM superfamily. RlmN family. It depends on [4Fe-4S] cluster as a cofactor.

It is found in the cytoplasm. It carries out the reaction adenosine(2503) in 23S rRNA + 2 reduced [2Fe-2S]-[ferredoxin] + 2 S-adenosyl-L-methionine = 2-methyladenosine(2503) in 23S rRNA + 5'-deoxyadenosine + L-methionine + 2 oxidized [2Fe-2S]-[ferredoxin] + S-adenosyl-L-homocysteine. The enzyme catalyses adenosine(37) in tRNA + 2 reduced [2Fe-2S]-[ferredoxin] + 2 S-adenosyl-L-methionine = 2-methyladenosine(37) in tRNA + 5'-deoxyadenosine + L-methionine + 2 oxidized [2Fe-2S]-[ferredoxin] + S-adenosyl-L-homocysteine. Functionally, specifically methylates position 2 of adenine 2503 in 23S rRNA and position 2 of adenine 37 in tRNAs. m2A2503 modification seems to play a crucial role in the proofreading step occurring at the peptidyl transferase center and thus would serve to optimize ribosomal fidelity. In Helicobacter pylori (strain P12), this protein is Dual-specificity RNA methyltransferase RlmN.